The following is a 162-amino-acid chain: uncharacterized protein (162 aa).

It is found in the cytoplasm. The protein resides in the nucleus. This is an uncharacterized protein from Schizosaccharomyces pombe (strain 972 / ATCC 24843) (Fission yeast).